Reading from the N-terminus, the 330-residue chain is Inactive hydroxysteroid dehydrogenase-like protein 1 (330 aa).

Ala2 carries the post-translational modification N-acetylalanine. The interval Ala2–Ala82 is required for mitochondria translocation. Residues Gly74–Gly80, Asp125, and Lys222 each bind NADP(+).

This sequence belongs to the short-chain dehydrogenases/reductases (SDR) family. 17-beta-HSD 3 subfamily. Interacts with STYXL1.

Its subcellular location is the mitochondrion. The sequence is that of Inactive hydroxysteroid dehydrogenase-like protein 1 (Hsdl1) from Rattus norvegicus (Rat).